A 299-amino-acid chain; its full sequence is Oxygen-dependent coproporphyrinogen-III oxidase (299 aa).

Ser92 is a binding site for substrate. Positions 96 and 106 each coordinate a divalent metal cation. Catalysis depends on His106, which acts as the Proton donor. Asn108 to Arg110 provides a ligand contact to substrate. Positions 145 and 175 each coordinate a divalent metal cation. The important for dimerization stretch occupies residues Tyr240–Glu275. Position 258 to 260 (Gly258 to Arg260) interacts with substrate.

It belongs to the aerobic coproporphyrinogen-III oxidase family. As to quaternary structure, homodimer. A divalent metal cation is required as a cofactor.

The protein resides in the cytoplasm. It catalyses the reaction coproporphyrinogen III + O2 + 2 H(+) = protoporphyrinogen IX + 2 CO2 + 2 H2O. Its pathway is porphyrin-containing compound metabolism; protoporphyrin-IX biosynthesis; protoporphyrinogen-IX from coproporphyrinogen-III (O2 route): step 1/1. Its function is as follows. Involved in the heme biosynthesis. Catalyzes the aerobic oxidative decarboxylation of propionate groups of rings A and B of coproporphyrinogen-III to yield the vinyl groups in protoporphyrinogen-IX. The sequence is that of Oxygen-dependent coproporphyrinogen-III oxidase from Shigella flexneri.